Reading from the N-terminus, the 533-residue chain is Beta-glucosidase 10 (533 aa).

The N-terminal stretch at 1 to 23 is a signal peptide; that stretch reads MAVAGAMVMSGGVLLLLLAFTCA. Residue Gln53 participates in a beta-D-glucoside binding. An N-linked (GlcNAc...) asparagine glycan is attached at Asn122. A beta-D-glucoside-binding positions include His157 and 202 to 203; that span reads NE. Glu203 serves as the catalytic Proton donor. Cys222 and Cys230 are joined by a disulfide. Tyr369 provides a ligand contact to a beta-D-glucoside. The N-linked (GlcNAc...) asparagine glycan is linked to Asn384. Position 440 (Glu440) interacts with a beta-D-glucoside. The Nucleophile role is filled by Glu440. Residue Asn448 is glycosylated (N-linked (GlcNAc...) asparagine). A beta-D-glucoside is bound by residues Trp489, 496–497, and Phe505; that span reads EW.

It belongs to the glycosyl hydrolase 1 family.

It catalyses the reaction Hydrolysis of terminal, non-reducing beta-D-glucosyl residues with release of beta-D-glucose.. This chain is Beta-glucosidase 10 (BGLU10), found in Oryza sativa subsp. japonica (Rice).